Consider the following 308-residue polypeptide: Ribonuclease Z (308 aa).

The Zn(2+) site is built by His-60, His-62, Asp-64, His-65, His-140, Asp-209, and His-269. Asp-64 acts as the Proton acceptor in catalysis.

It belongs to the RNase Z family. As to quaternary structure, homodimer. Requires Zn(2+) as cofactor.

The catalysed reaction is Endonucleolytic cleavage of RNA, removing extra 3' nucleotides from tRNA precursor, generating 3' termini of tRNAs. A 3'-hydroxy group is left at the tRNA terminus and a 5'-phosphoryl group is left at the trailer molecule.. Its function is as follows. Zinc phosphodiesterase, which displays some tRNA 3'-processing endonuclease activity. Probably involved in tRNA maturation, by removing a 3'-trailer from precursor tRNA. The chain is Ribonuclease Z from Methanococcus maripaludis (strain DSM 14266 / JCM 13030 / NBRC 101832 / S2 / LL).